Reading from the N-terminus, the 196-residue chain is Large ribosomal subunit protein eL15 (196 aa).

Residues 69–98 show a composition bias toward basic residues; it reads RKGGSRKQRHKAGRRSKRQGVNRLSRRKSI. 2 disordered regions span residues 69–100 and 161–196; these read RKGGSRKQRHKAGRRSKRQGVNRLSRRKSIQR and FRGLTSAGTKGRGQRTRGTGTEKTRPSVTGNDRQGK. Positions 186–196 are enriched in polar residues; that stretch reads PSVTGNDRQGK.

It belongs to the eukaryotic ribosomal protein eL15 family.

The polypeptide is Large ribosomal subunit protein eL15 (Halorubrum lacusprofundi (strain ATCC 49239 / DSM 5036 / JCM 8891 / ACAM 34)).